The sequence spans 129 residues: Glycine cleavage system H protein (129 aa).

Positions 24–106 constitute a Lipoyl-binding domain; that stretch reads SYTVGITEHA…YGEGWFFRVM (83 aa). N6-lipoyllysine is present on lysine 65.

Belongs to the GcvH family. As to quaternary structure, the glycine cleavage system is composed of four proteins: P, T, L and H. Requires (R)-lipoate as cofactor.

In terms of biological role, the glycine cleavage system catalyzes the degradation of glycine. The H protein shuttles the methylamine group of glycine from the P protein to the T protein. In Shewanella putrefaciens (strain CN-32 / ATCC BAA-453), this protein is Glycine cleavage system H protein.